A 710-amino-acid polypeptide reads, in one-letter code: Mitochondrial intermediate peptidase (710 aa).

The transit peptide at methionine 1–serine 33 directs the protein to the mitochondrion. At lysine 124 the chain carries N6-acetyllysine. Histidine 492 is a binding site for Zn(2+). Glutamate 493 is a catalytic residue. Zn(2+) contacts are provided by histidine 496 and histidine 499.

This sequence belongs to the peptidase M3 family. Monomer. Zn(2+) serves as cofactor.

The protein localises to the mitochondrion matrix. It catalyses the reaction Release of an N-terminal octapeptide as second stage of processing of some proteins imported into the mitochondrion.. Its activity is regulated as follows. Activity is divalent cation-dependent. It is stimulated by manganese, magnesium or calcium ions and reversibly inhibited by zinc, cobalt and iron. Its function is as follows. Cleaves proteins, imported into the mitochondrion, to their mature size. This is Mitochondrial intermediate peptidase (Mipep) from Rattus norvegicus (Rat).